The primary structure comprises 173 residues: Large ribosomal subunit protein uL10 (173 aa).

This sequence belongs to the universal ribosomal protein uL10 family. In terms of assembly, part of the ribosomal stalk of the 50S ribosomal subunit. The N-terminus interacts with L11 and the large rRNA to form the base of the stalk. The C-terminus forms an elongated spine to which L12 dimers bind in a sequential fashion forming a multimeric L10(L12)X complex.

In terms of biological role, forms part of the ribosomal stalk, playing a central role in the interaction of the ribosome with GTP-bound translation factors. In Corynebacterium aurimucosum (strain ATCC 700975 / DSM 44827 / CIP 107346 / CN-1) (Corynebacterium nigricans), this protein is Large ribosomal subunit protein uL10.